A 410-amino-acid polypeptide reads, in one-letter code: Maintenance of mitochondrial morphology protein 1 (410 aa).

The Lumenal portion of the chain corresponds to Met1–Gly19. A helical transmembrane segment spans residues Leu20–Phe40. Residues Gly41–Asp410 are Cytoplasmic-facing. Residues Leu71 to Leu87 are compositionally biased toward polar residues. The interval Leu71–Gly98 is disordered. Residues Gln119–Pro335 enclose the SMP-LTD domain. Positions Ala380 to Asp410 are disordered. Residues Asp387–Asp398 show a composition bias toward basic and acidic residues.

It belongs to the MMM1 family. In terms of assembly, homodimer. Component of the ER-mitochondria encounter structure (ERMES) or MDM complex, composed of MMM1, MDM10, MDM12 and MDM34. An MMM1 homodimer associates with one molecule of MDM12 on each side in a pairwise head-to-tail manner, and the SMP-LTD domains of MMM1 and MDM12 generate a continuous hydrophobic tunnel for phospholipid trafficking.

It localises to the endoplasmic reticulum membrane. Its function is as follows. Component of the ERMES/MDM complex, which serves as a molecular tether to connect the endoplasmic reticulum (ER) and mitochondria. Components of this complex are involved in the control of mitochondrial shape and protein biogenesis, and function in nonvesicular lipid trafficking between the ER and mitochondria. The MDM12-MMM1 subcomplex functions in the major beta-barrel assembly pathway that is responsible for biogenesis of all outer membrane beta-barrel proteins, and acts in a late step after the SAM complex. The MDM10-MDM12-MMM1 subcomplex further acts in the TOM40-specific pathway after the action of the MDM12-MMM1 complex. Essential for establishing and maintaining the structure of mitochondria and maintenance of mtDNA nucleoids. This is Maintenance of mitochondrial morphology protein 1 from Pyricularia oryzae (strain 70-15 / ATCC MYA-4617 / FGSC 8958) (Rice blast fungus).